Consider the following 393-residue polypeptide: Endoglucanase 1 (393 aa).

The N-terminal stretch at 1–26 is a signal peptide; sequence MAFKLNIGLLALSLSLSLVHLDGVRA. The Nucleophile role is filled by Asp34. The active-site Proton donor is Asp152. Residues 233–393 form a disordered region; the sequence is GCQRKDDNTI…GGHKKCHKKH (161 aa). Low complexity-rich tracts occupy residues 319 to 329 and 337 to 370; these read QGSSNGDATTG and DSGS…NPGA. An N-linked (GlcNAc...) asparagine glycan is attached at Asn343. Over residues 371 to 384 the composition is skewed to gly residues; that stretch reads AQGGQGGAQPGPSG.

The protein belongs to the glycosyl hydrolase 45 (cellulase K) family. May also be O-glycosylated. Hyphal tip.

It localises to the secreted. The enzyme catalyses Endohydrolysis of (1-&gt;4)-beta-D-glucosidic linkages in cellulose, lichenin and cereal beta-D-glucans.. The chain is Endoglucanase 1 (EGL1) from Mycosarcoma maydis (Corn smut fungus).